The primary structure comprises 129 residues: ATP synthase epsilon chain (129 aa).

This sequence belongs to the ATPase epsilon chain family. In terms of assembly, F-type ATPases have 2 components, CF(1) - the catalytic core - and CF(0) - the membrane proton channel. CF(1) has five subunits: alpha(3), beta(3), gamma(1), delta(1), epsilon(1). CF(0) has three main subunits: a, b and c.

The protein resides in the cell inner membrane. Functionally, produces ATP from ADP in the presence of a proton gradient across the membrane. The polypeptide is ATP synthase epsilon chain (Campylobacter fetus subsp. fetus (strain 82-40)).